We begin with the raw amino-acid sequence, 767 residues long: Granule-bound starch synthase 2, chloroplastic/amyloplastic (767 aa).

Residues 1 to 45 (MENSILLHSGNQFHPNLPLLALRPKKLSLIHGSSREQMWRIKRVK) constitute a chloroplast transit peptide. Disordered regions lie at residues 160-204 (KRDL…SSQE) and 226-268 (YMPS…EKPP). Low complexity predominate over residues 172 to 188 (SRSSITASSQISSTVSS). The span at 230-245 (LRKESSASHVEQRNEN) shows a compositional bias: basic and acidic residues. The segment covering 253–262 (ANEETEDPVN) has biased composition (acidic residues). Lys-290 contributes to the ADP-alpha-D-glucose binding site.

Belongs to the glycosyltransferase 1 family. Bacterial/plant glycogen synthase subfamily.

Its subcellular location is the plastid. The protein resides in the chloroplast. The protein localises to the amyloplast. The catalysed reaction is [(1-&gt;4)-alpha-D-glucosyl](n) + ADP-alpha-D-glucose = [(1-&gt;4)-alpha-D-glucosyl](n+1) + ADP + H(+). It functions in the pathway glycan biosynthesis; starch biosynthesis. Accounts for only 10 to 15% of the total soluble starch synthase activity in tubers. The sequence is that of Granule-bound starch synthase 2, chloroplastic/amyloplastic (SS2) from Solanum tuberosum (Potato).